The primary structure comprises 31 residues: Spectrin beta chain, non-erythrocytic 1 (31 aa).

3 Spectrin repeats span residues Val1–Lys10, Tyr11–Arg19, and Thr20–Lys31. Tyr27 carries the post-translational modification Phosphotyrosine.

The protein belongs to the spectrin family. Interacts with ANK2. Interacts with CPNE4 (via VWFA domain). Like erythrocyte spectrin, the spectrin-like proteins are capable to form dimers which can further associate to tetramers. Associates with the gamma-tubulin complex in brain, but not in kidney, liver, sperm, or uterus. Interacts with CAMSAP1. Can form heterodimers with SPTAN1.

It is found in the cytoplasm. Its subcellular location is the cytoskeleton. The protein resides in the myofibril. The protein localises to the sarcomere. It localises to the m line. It is found in the cytosol. Its subcellular location is the cell membrane. In terms of biological role, fodrin, which seems to be involved in secretion, interacts with calmodulin in a calcium-dependent manner and is thus candidate for the calcium-dependent movement of the cytoskeleton at the membrane. Plays a critical role in central nervous system development and function. The chain is Spectrin beta chain, non-erythrocytic 1 (SPTBN1) from Capra hircus (Goat).